Here is a 443-residue protein sequence, read N- to C-terminus: L-ornithine N(5)-monooxygenase (443 aa).

FAD-binding positions include 45–53 (DKQGDYRWH) and Q64. K69 lines the substrate pocket. V130 is a binding site for FAD. NADP(+)-binding positions include 215–218 (GGQS) and R240. Substrate contacts are provided by residues 254–257 (NEVF) and N284. 284 to 286 (NYS) contacts NADP(+). Residue 407–409 (TLL) participates in FAD binding. S410 contributes to the substrate binding site.

It belongs to the lysine N(6)-hydroxylase/L-ornithine N(5)-oxygenase family. As to quaternary structure, homotetramer. It depends on FAD as a cofactor.

Its subcellular location is the cell inner membrane. The enzyme catalyses L-ornithine + NADPH + O2 = N(5)-hydroxy-L-ornithine + NADP(+) + H2O. The protein operates within siderophore biosynthesis; pyoverdin biosynthesis. Functionally, catalyzes the conversion of L-ornithine to N(5)-hydroxyornithine, the first step in the biosynthesis of all hydroxamate-containing siderophores, such as pyoverdin. Pyoverdin is a hydroxamate siderophore composed of a 6,7-dihydroxyquinoline-containing fluorescent chromophore joined to the N-terminus of a partly cyclic octapeptide (D-Ser-L-Arg-D-Ser-L-N(5)-OH-Orn-L-Lys-L-N(5)-OH-Orn-L-Thr-L-Thr in strain PAO1). Specific for NADPH, which plays a role in stabilization of the C4a-hydroperoxyflavin intermediate. This Pseudomonas aeruginosa (strain ATCC 15692 / DSM 22644 / CIP 104116 / JCM 14847 / LMG 12228 / 1C / PRS 101 / PAO1) protein is L-ornithine N(5)-monooxygenase.